A 45-amino-acid polypeptide reads, in one-letter code: Monellin chain A (45 aa).

As to quaternary structure, heterodimer of an A chain and a B chain.

In terms of biological role, taste-modifying protein; intensely sweet-tasting protein. The sequence is that of Monellin chain A from Dioscoreophyllum cumminsii (Serendipity berry).